A 260-amino-acid chain; its full sequence is Proteasome subunit alpha (260 aa).

The disordered stretch occupies residues 231 to 260 (LLPEDFSPGQTEGGGDPAPESGDSKDAKDN).

This sequence belongs to the peptidase T1A family. The 20S proteasome core is composed of 14 alpha and 14 beta subunits that assemble into four stacked heptameric rings, resulting in a barrel-shaped structure. The two inner rings, each composed of seven catalytic beta subunits, are sandwiched by two outer rings, each composed of seven alpha subunits. The catalytic chamber with the active sites is on the inside of the barrel. Has a gated structure, the ends of the cylinder being occluded by the N-termini of the alpha-subunits. Is capped by the proteasome-associated ATPase, ARC.

The protein resides in the cytoplasm. The protein operates within protein degradation; proteasomal Pup-dependent pathway. Its activity is regulated as follows. The formation of the proteasomal ATPase ARC-20S proteasome complex, likely via the docking of the C-termini of ARC into the intersubunit pockets in the alpha-rings, may trigger opening of the gate for substrate entry. Interconversion between the open-gate and close-gate conformations leads to a dynamic regulation of the 20S proteasome proteolysis activity. Functionally, component of the proteasome core, a large protease complex with broad specificity involved in protein degradation. This Mycobacteroides abscessus (strain ATCC 19977 / DSM 44196 / CCUG 20993 / CIP 104536 / JCM 13569 / NCTC 13031 / TMC 1543 / L948) (Mycobacterium abscessus) protein is Proteasome subunit alpha.